The sequence spans 364 residues: GMP reductase (364 aa).

NADP(+)-binding positions include 26–27 (SR), K78, 132–134 (DVA), and 183–184 (IG). G184, G186, and C189 together coordinate K(+). C189 (thioimidate intermediate) is an active-site residue. T191 acts as the Proton donor/acceptor in catalysis. R192 is a K(+) binding site. GMP-binding positions include 222–224 (DGG), 245–246 (GG), 271–273 (GMS), and 289–293 (RASEG). Residues M272, 288–289 (YR), and 317–320 (SACT) each bind NADP(+).

This sequence belongs to the IMPDH/GMPR family. GuaC type 1 subfamily. As to quaternary structure, homotetramer.

The catalysed reaction is IMP + NH4(+) + NADP(+) = GMP + NADPH + 2 H(+). Functionally, catalyzes the irreversible NADPH-dependent deamination of GMP to IMP. It functions in the conversion of nucleobase, nucleoside and nucleotide derivatives of G to A nucleotides, and in maintaining the intracellular balance of A and G nucleotides. The protein is GMP reductase (gmr-1) of Onchocerca volvulus.